Consider the following 326-residue polypeptide: Probable 9-O-acetyl-N-acetylneuraminic acid deacetylase (326 aa).

An N-terminal signal peptide occupies residues 1-21; the sequence is MNAIISPDYYYVLTVAGQSNA.

The protein resides in the periplasm. In terms of biological role, probably catalyzes the hydrolysis of the 9-O-acetyl group of 9-O-acetyl-N-acetylneuraminate (Neu5,9Ac2). Is required for growth of E.coli on Neu5,9Ac2, an alternative sialic acid commonly found in mammalian host mucosal sites, in particular in the human intestine. In Escherichia coli (strain K12), this protein is Probable 9-O-acetyl-N-acetylneuraminic acid deacetylase (nanS).